Here is a 429-residue protein sequence, read N- to C-terminus: Isocitrate dehydrogenase [NADP] (429 aa).

Residue T108 participates in NADP(+) binding. S117, N119, R123, R133, and R156 together coordinate D-threo-isocitrate. D308 lines the Mg(2+) pocket. NADP(+) contacts are provided by residues 340-346 (HGSAPKY), N353, Y393, and R397.

The protein belongs to the isocitrate and isopropylmalate dehydrogenases family. As to quaternary structure, homodimer. Mg(2+) serves as cofactor. The cofactor is Mn(2+).

It carries out the reaction D-threo-isocitrate + NADP(+) = 2-oxoglutarate + CO2 + NADPH. Catalyzes the oxidative decarboxylation of isocitrate to 2-oxoglutarate and carbon dioxide with the concomitant reduction of NADP(+). This chain is Isocitrate dehydrogenase [NADP] (icd), found in Caldococcus noboribetus.